Consider the following 144-residue polypeptide: Large ribosomal subunit protein uL15 (144 aa).

The disordered stretch occupies residues 1-51 (MELNSIKPGSGSKHAKRRVGRGIGSGLGKTAGRGHKGQKSRAGGYHKVGFE). The segment covering 21-31 (RGIGSGLGKTA) has biased composition (gly residues).

The protein belongs to the universal ribosomal protein uL15 family. As to quaternary structure, part of the 50S ribosomal subunit.

In terms of biological role, binds to the 23S rRNA. The chain is Large ribosomal subunit protein uL15 from Leptothrix cholodnii (strain ATCC 51168 / LMG 8142 / SP-6) (Leptothrix discophora (strain SP-6)).